A 480-amino-acid chain; its full sequence is Glutarate-semialdehyde dehydrogenase (480 aa).

NADP(+)-binding positions include 156 to 157 (WN), 180 to 183 (KPAS), and 233 to 234 (GS). The active-site Proton acceptor is glutamate 255. Residue leucine 256 participates in NADP(+) binding. Cysteine 289 functions as the Nucleophile in the catalytic mechanism. Glutamate 384 serves as a coordination point for NADP(+).

This sequence belongs to the aldehyde dehydrogenase family.

The enzyme catalyses 5-oxopentanoate + NADP(+) + H2O = glutarate + NADPH + 2 H(+). It participates in amino-acid degradation. Its function is as follows. Catalyzes the conversion of 5-oxopentanoate (glutarate semialdehyde) to glutarate. Involved in L-lysine degradation. This is Glutarate-semialdehyde dehydrogenase from Pseudomonas putida (strain ATCC 47054 / DSM 6125 / CFBP 8728 / NCIMB 11950 / KT2440).